The following is a 232-amino-acid chain: Chaperone protein CssC (232 aa).

The N-terminal stretch at methionine 1–glutamate 20 is a signal peptide.

Belongs to the periplasmic pilus chaperone family.

The protein localises to the periplasm. Functionally, involved in the biogenesis of the CS6 fimbria. This is Chaperone protein CssC (cssC) from Escherichia coli.